The primary structure comprises 154 residues: Acidic phospholipase A2 2 (154 aa).

The first 19 residues, 1–19 (MHPAHLLVPLGVCVSLLGA), serve as a signal peptide directing secretion. Residues 20 to 27 (ARIPPLPL) constitute a propeptide that is removed on maturation. 7 disulfide bridges follow: C38–C104, C54–C153, C56–C72, C71–C132, C78–C125, C88–C118, and C111–C123. Residues Y55, G57, and G59 each coordinate Ca(2+). Residue H75 is part of the active site. Residue D76 participates in Ca(2+) binding. The active site involves D126.

This sequence belongs to the phospholipase A2 family. Group I subfamily. D49 sub-subfamily. As to quaternary structure, monomer. It depends on Ca(2+) as a cofactor. Expressed by the venom gland.

Its subcellular location is the secreted. It catalyses the reaction a 1,2-diacyl-sn-glycero-3-phosphocholine + H2O = a 1-acyl-sn-glycero-3-phosphocholine + a fatty acid + H(+). In terms of biological role, snake venom phospholipase A2 (PLA2) that shows moderate enzymatic activity and exhibits procoagulant activity. PLA2 catalyzes the calcium-dependent hydrolysis of the 2-acyl groups in 3-sn-phosphoglycerides. The chain is Acidic phospholipase A2 2 from Pseudonaja textilis (Eastern brown snake).